Reading from the N-terminus, the 440-residue chain is Trigger factor (440 aa).

The PPIase FKBP-type domain occupies 163-248; the sequence is GDGVTVDFEG…VKKIESAHLP (86 aa).

The protein belongs to the FKBP-type PPIase family. Tig subfamily.

Its subcellular location is the cytoplasm. The catalysed reaction is [protein]-peptidylproline (omega=180) = [protein]-peptidylproline (omega=0). Functionally, involved in protein export. Acts as a chaperone by maintaining the newly synthesized protein in an open conformation. Functions as a peptidyl-prolyl cis-trans isomerase. In Verminephrobacter eiseniae (strain EF01-2), this protein is Trigger factor.